A 772-amino-acid polypeptide reads, in one-letter code: Bromo adjacent homology domain-containing 1 protein (772 aa).

Disordered stretches follow at residues 1–63 (MTHT…RSLV) and 77–117 (LENV…PRKR). Position 8 is a phosphoserine (Ser8). A compositionally biased stretch (basic residues) spans 49–61 (TGRRKNYPLRKRS). A phosphoserine mark is found at Ser101 and Ser121. Disordered regions lie at residues 131 to 357 (LLER…PADY), 521 to 582 (QTVA…RTNG), and 723 to 743 (PSRK…PHRT). 3 stretches are compositionally biased toward basic and acidic residues: residues 147–158 (RGGDPHRSRDRA), 170–182 (RLGD…RDLS), and 189–199 (EGARRDGDPAP). Ser182 is modified (phosphoserine). Ser204 is subject to Phosphoserine. The span at 280–289 (SAPPHGPPTQ) shows a compositional bias: pro residues. Low complexity predominate over residues 299 to 310 (LENPLRPNLPLL). Positions 340–352 (FPAPQLSPLPMPG) are enriched in pro residues. The segment covering 536-548 (GSKSGLRTGSSCR) has biased composition (polar residues). Residues 549–580 (HTVRSKAARRPSHPKQPRAQRPRPRRRRRRRT) show a composition bias toward basic residues. Phosphothreonine is present on Thr580. Residues 616 to 771 (ETIRVRDTVL…FRHGRILKNP (156 aa)) enclose the BAH domain.

As to quaternary structure, interacts with CBX5 (HP1 alpha), HDAC5, MBD1 and SP1. Ubiquitinated in a FBXO11-dependent manner; leading to degradation.

The protein localises to the nucleus. Its subcellular location is the chromosome. Functionally, heterochromatin protein that acts as a transcription repressor and has the ability to promote the formation of large heterochromatic domains. May act by recruiting heterochromatin proteins such as CBX5 (HP1 alpha), HDAC5 and MBD1. Represses IGF2 expression by binding to its CpG-rich P3 promoter and recruiting heterochromatin proteins. This chain is Bromo adjacent homology domain-containing 1 protein (Bahd1), found in Mus musculus (Mouse).